We begin with the raw amino-acid sequence, 881 residues long: Translation initiation factor IF-2 (881 aa).

2 disordered regions span residues 31-147 (KLAQ…TKVP) and 165-291 (SVVG…HYDE). Positions 42–55 (NSSEKPSAKVAEKV) are enriched in basic and acidic residues. The span at 68 to 77 (ATPESVSSET) shows a compositional bias: polar residues. The span at 114–128 (VEEEIASSTDSEPEV) shows a compositional bias: acidic residues. The segment covering 191–203 (PKKEDKPAPKERS) has biased composition (basic and acidic residues). A compositionally biased stretch (polar residues) spans 204 to 233 (GQAQAKPQQSSEASSENKPHSPNNNRSSQP). A compositionally biased stretch (basic and acidic residues) spans 235–267 (YRRDTSKKPGSDFRDRAKKDDNPKAFTGRDRYG). Positions 278 to 287 (RKKRVQKTKK) are enriched in basic residues. A tr-type G domain is found at 387–556 (IRPPIVAFMG…ALQAEVLELK (170 aa)). The interval 396 to 403 (GHVDHGKT) is G1. GTP is bound at residue 396-403 (GHVDHGKT). The segment at 421–425 (AITQH) is G2. The G3 stretch occupies residues 442-445 (DTPG). GTP-binding positions include 442-446 (DTPGH) and 496-499 (NKCD). Residues 496–499 (NKCD) form a G4 region. Positions 532–534 (SAK) are G5.

Belongs to the TRAFAC class translation factor GTPase superfamily. Classic translation factor GTPase family. IF-2 subfamily.

It localises to the cytoplasm. Its function is as follows. One of the essential components for the initiation of protein synthesis. Protects formylmethionyl-tRNA from spontaneous hydrolysis and promotes its binding to the 30S ribosomal subunits. Also involved in the hydrolysis of GTP during the formation of the 70S ribosomal complex. This chain is Translation initiation factor IF-2, found in Chlamydia felis (strain Fe/C-56) (Chlamydophila felis).